A 119-amino-acid polypeptide reads, in one-letter code: Ribonuclease P protein component (119 aa).

This sequence belongs to the RnpA family. In terms of assembly, consists of a catalytic RNA component (M1 or rnpB) and a protein subunit.

The catalysed reaction is Endonucleolytic cleavage of RNA, removing 5'-extranucleotides from tRNA precursor.. Functionally, RNaseP catalyzes the removal of the 5'-leader sequence from pre-tRNA to produce the mature 5'-terminus. It can also cleave other RNA substrates such as 4.5S RNA. The protein component plays an auxiliary but essential role in vivo by binding to the 5'-leader sequence and broadening the substrate specificity of the ribozyme. In Clostridium acetobutylicum (strain ATCC 824 / DSM 792 / JCM 1419 / IAM 19013 / LMG 5710 / NBRC 13948 / NRRL B-527 / VKM B-1787 / 2291 / W), this protein is Ribonuclease P protein component.